A 349-amino-acid polypeptide reads, in one-letter code: Flagellar P-ring protein (349 aa).

Residues 1–20 form the signal peptide; sequence MSKAIKILLPLLLFSLSLQA.

Belongs to the FlgI family. The basal body constitutes a major portion of the flagellar organelle and consists of four rings (L,P,S, and M) mounted on a central rod.

Its subcellular location is the periplasm. The protein resides in the bacterial flagellum basal body. Assembles around the rod to form the L-ring and probably protects the motor/basal body from shearing forces during rotation. The polypeptide is Flagellar P-ring protein (Wolinella succinogenes (strain ATCC 29543 / DSM 1740 / CCUG 13145 / JCM 31913 / LMG 7466 / NCTC 11488 / FDC 602W) (Vibrio succinogenes)).